The chain runs to 102 residues: Putative defensin-like protein 298 (102 aa).

Residues 1–29 (MSASKATMLILFALFLSDILLVSIPRAEA) form the signal peptide. Disulfide bonds link Cys35/Cys53, Cys41/Cys58, Cys46/Cys60, Cys74/Cys93, Cys80/Cys98, and Cys86/Cys100.

This sequence belongs to the DEFL family.

Its subcellular location is the secreted. This Arabidopsis thaliana (Mouse-ear cress) protein is Putative defensin-like protein 298.